The primary structure comprises 194 residues: uncharacterized protein (194 aa).

The span at 77 to 92 shows a compositional bias: polar residues; the sequence is QTQPQHQTLSQHLPQT. The interval 77 to 96 is disordered; the sequence is QTQPQHQTLSQHLPQTHHTD. Residues 169 to 189 form a helical membrane-spanning segment; it reads FWEILLLIILIAVLVYGIYWL.

The protein resides in the host membrane. It is found in the virion. This is an uncharacterized protein from Acanthamoeba polyphaga (Amoeba).